A 424-amino-acid chain; its full sequence is ATP-sensitive inward rectifier potassium channel 8 (424 aa).

Over 1 to 69 (MLARKSIIPE…IFTTLVDLKW (69 aa)) the chain is Cytoplasmic. The residue at position 6 (serine 6) is a Phosphoserine. The chain crosses the membrane as a helical span at residues 70-94 (RHTLVIFTMSFLCSWLLFAIMWWLV). At 95–126 (AFAHGDIYAYMEKSGMEKSGLESTVCVTNVRS) the chain is on the extracellular side. An intramembrane region (helical; Pore-forming) is located at residues 127 to 138 (FTSAFLFSIEVQ). The pore-forming intramembrane region spans 139-145 (VTIGFGG). Residues 140–145 (TIGFGG) carry the Selectivity filter motif. At 146 to 154 (RMMTEECPL) the chain is on the extracellular side. Residues 155 to 176 (AITVLILQNIVGLIINAVMLGC) form a helical membrane-spanning segment. The Cytoplasmic segment spans residues 177-424 (IFMKTAQAHR…PEGNQNTSES (248 aa)). The tract at residues 375-424 (SHQNSLRKRNSMRRNNSMRRNNSIRRNNSSLMVPKVQFMTPEGNQNTSES) is disordered. Positions 387-404 (RRNNSMRRNNSIRRNNSS) are enriched in low complexity.

This sequence belongs to the inward rectifier-type potassium channel (TC 1.A.2.1) family. KCNJ8 subfamily. Interacts with ABCC9. As to expression, predominantly detected in fetal and adult heart.

It localises to the membrane. The catalysed reaction is K(+)(in) = K(+)(out). Its function is as follows. Inward rectifier potassium channels are characterized by a greater tendency to allow potassium to flow into the cell rather than out of it. Their voltage dependence is regulated by the concentration of extracellular potassium; as external potassium is raised, the voltage range of the channel opening shifts to more positive voltages. The inward rectification is mainly due to the blockage of outward current by internal magnesium. This channel is activated by internal ATP and can be blocked by external barium. Can form a sulfonylurea-sensitive but ATP-insensitive potassium channel with ABCC9. This Homo sapiens (Human) protein is ATP-sensitive inward rectifier potassium channel 8 (KCNJ8).